A 117-amino-acid polypeptide reads, in one-letter code: MARTKPGKTTRARHKKILKLAKGYYGARSKHFRPANETVMKALFYARRDRRQRKRNFRRLWIARINAAARMNGLTYSQFINGLNKAGVQLNRKVLADIAVNDAAGFSALVEKAKASL.

Belongs to the bacterial ribosomal protein bL20 family.

In terms of biological role, binds directly to 23S ribosomal RNA and is necessary for the in vitro assembly process of the 50S ribosomal subunit. It is not involved in the protein synthesizing functions of that subunit. This Symbiobacterium thermophilum (strain DSM 24528 / JCM 14929 / IAM 14863 / T) protein is Large ribosomal subunit protein bL20.